Consider the following 982-residue polypeptide: Probable DNA-directed RNA polymerase (982 aa).

It belongs to the RNA polymerase beta chain family.

The enzyme catalyses RNA(n) + a ribonucleoside 5'-triphosphate = RNA(n+1) + diphosphate. In terms of biological role, the presence of the two linear plasmids, termed pGKL1 and pGKL2, in strains of Kluyveromyces lactis confers the killer phenotype to the host cell, by promoting the secretion of a toxin able to inhibit the growth of sensitive strains. The protein is Probable DNA-directed RNA polymerase of Kluyveromyces lactis (strain ATCC 8585 / CBS 2359 / DSM 70799 / NBRC 1267 / NRRL Y-1140 / WM37) (Yeast).